We begin with the raw amino-acid sequence, 219 residues long: Endonuclease III (219 aa).

In terms of domain architecture, HhH spans 109 to 128 (RDELVKLPGVGRKTANVVVS). Positions 189, 196, 199, and 205 each coordinate [4Fe-4S] cluster.

Belongs to the Nth/MutY family. The cofactor is [4Fe-4S] cluster.

It catalyses the reaction 2'-deoxyribonucleotide-(2'-deoxyribose 5'-phosphate)-2'-deoxyribonucleotide-DNA = a 3'-end 2'-deoxyribonucleotide-(2,3-dehydro-2,3-deoxyribose 5'-phosphate)-DNA + a 5'-end 5'-phospho-2'-deoxyribonucleoside-DNA + H(+). Functionally, DNA repair enzyme that has both DNA N-glycosylase activity and AP-lyase activity. The DNA N-glycosylase activity releases various damaged pyrimidines from DNA by cleaving the N-glycosidic bond, leaving an AP (apurinic/apyrimidinic) site. The AP-lyase activity cleaves the phosphodiester bond 3' to the AP site by a beta-elimination, leaving a 3'-terminal unsaturated sugar and a product with a terminal 5'-phosphate. This is Endonuclease III from Bacillus subtilis (strain 168).